We begin with the raw amino-acid sequence, 272 residues long: Dermonecrotic toxin SpeSicTox-betaIB1a (272 aa).

H5 is a catalytic residue. Mg(2+) contacts are provided by E25 and D27. Catalysis depends on H41, which acts as the Nucleophile. Disulfide bonds link C45-C51 and C47-C191. Mg(2+) is bound at residue D85.

It belongs to the arthropod phospholipase D family. Class II subfamily. Requires Mg(2+) as cofactor. Expressed by the venom gland.

It is found in the secreted. The catalysed reaction is an N-(acyl)-sphingosylphosphocholine = an N-(acyl)-sphingosyl-1,3-cyclic phosphate + choline. It catalyses the reaction an N-(acyl)-sphingosylphosphoethanolamine = an N-(acyl)-sphingosyl-1,3-cyclic phosphate + ethanolamine. The enzyme catalyses a 1-acyl-sn-glycero-3-phosphocholine = a 1-acyl-sn-glycero-2,3-cyclic phosphate + choline. It carries out the reaction a 1-acyl-sn-glycero-3-phosphoethanolamine = a 1-acyl-sn-glycero-2,3-cyclic phosphate + ethanolamine. In terms of biological role, dermonecrotic toxins cleave the phosphodiester linkage between the phosphate and headgroup of certain phospholipids (sphingolipid and lysolipid substrates), forming an alcohol (often choline) and a cyclic phosphate. This toxin acts on sphingomyelin (SM). It may also act on ceramide phosphoethanolamine (CPE), lysophosphatidylcholine (LPC) and lysophosphatidylethanolamine (LPE), but not on lysophosphatidylserine (LPS), and lysophosphatidylglycerol (LPG). It acts by transphosphatidylation, releasing exclusively cyclic phosphate products as second products. Induces dermonecrosis, hemolysis, increased vascular permeability, edema, inflammatory response, and platelet aggregation. The protein is Dermonecrotic toxin SpeSicTox-betaIB1a of Sicarius peruensis (Six-eyed sand spider).